The primary structure comprises 1113 residues: MPKRSDINHVLVIGSGPIVIGQACEFDYSGTQACRVLKEEGLRVTLINSNPATIMTDPEMADHTYVEPIEPEYIDKIFAKEIEQGHPIDAVLATLGGQTALNAAIQLDRLGILEKYGVELIGADIDAIERGEDRQKFKDIVTTIGGESARSRVCHNMEEVHETVAELGLPVVVRPSFTMGGLGSGLAYNTEDLERIAGGGLAASPEANVLIEESILGWKEFELELMRDTADNVVVICSIENVDALGVHTGDSVTVAPALTLTDREFQKMRDQGIAIIREVGVDTGGCNIQFAINPVDGRIITIEMNPRVSRSSALASKATGFPIAKMAAKLAIGYTLDEITNDITGETPAAFEPTIDYVVVKAPRFAFEKFVGADDTLTTTMKSVGEVMSLGRNYIAALNKALRSLETKQQGFWTKPDEFFAGERATDKAAVLEDLKRPTEGRLYDVELAMRLGASVEELYEASSIDPWFLAELEALVQFRQKLVDAPFLNEDLLREAKFMGLSDLQIAALRPEFAGEDGVRTLRLSLGIRPVFKTVDTCAAEFEAKTPYHYSAYELDPAAESEVAPQTEREKVLILGSGPNRIGQGIEFDYSCVHAALELSRVGYETVMVNCNPETVSTDYDTADRLYFEPLTFEDVMEVYHAEAQSGTVAGVIVQLGGQTPLGLADRLKKAGVPVIGTSPEAIDMAEDRGEFGALLNREQLPAPAFGTATSFEEARTVADEISYPVLVRPSYVLGGRGMEIVYDEASLEDYINRATELSSDHPVLVDRFLDNAIEIDVDALCDGDEVYLAGVMEHIEEAGIHSGDSACALPPMTLGAQDIEKVREATKKLALGIGVQGLMNVQYALKDDILYVIEANPRASRTVPFVSKATGVNLAKAASRIAVGATIKDLQDEGMIPTEYDGGSLPLDAPIAVKEAVLPFNRFRRPDGKTLDTLLSPEMKSTGEVMGLANNFGAAYAKAEAGAFGALPTEGTVFVTVANRDKRTLILPIQRLALMGYKILATEGTAGMLRRNGIECEVVLKASDIREGVEGKSIVDRIREGEVDLILNTPAGSAGARHDGYDIRAAAVTVGVPLITTVQGVTAAVQGIEALREGVVSVRALQELDHAVKA.

Positions 1-407 (MPKRSDINHV…ALNKALRSLE (407 aa)) are carboxyphosphate synthetic domain. ATP is bound by residues arginine 134, arginine 174, glycine 180, glycine 181, glutamate 213, isoleucine 215, glutamate 220, glycine 246, valine 247, histidine 248, glutamine 290, and glutamate 304. The 196-residue stretch at 138 to 333 (KDIVTTIGGE…IAKMAAKLAI (196 aa)) folds into the ATP-grasp 1 domain. Residues glutamine 290, glutamate 304, and asparagine 306 each coordinate Mg(2+). Positions 290, 304, and 306 each coordinate Mn(2+). Residues 408 to 565 (TKQQGFWTKP…ELDPAAESEV (158 aa)) are oligomerization domain. Residues 566–967 (APQTEREKVL…AYAKAEAGAF (402 aa)) form a carbamoyl phosphate synthetic domain region. In terms of domain architecture, ATP-grasp 2 spans 695–886 (GALLNREQLP…LAKAASRIAV (192 aa)). Arginine 731, arginine 770, leucine 772, glutamate 777, glycine 802, isoleucine 803, histidine 804, serine 805, glutamine 845, and glutamate 857 together coordinate ATP. Mg(2+) is bound by residues glutamine 845, glutamate 857, and asparagine 859. 3 residues coordinate Mn(2+): glutamine 845, glutamate 857, and asparagine 859. Residues 968-1113 (GALPTEGTVF…LQELDHAVKA (146 aa)) form the MGS-like domain. Residues 968–1113 (GALPTEGTVF…LQELDHAVKA (146 aa)) are allosteric domain.

It belongs to the CarB family. Composed of two chains; the small (or glutamine) chain promotes the hydrolysis of glutamine to ammonia, which is used by the large (or ammonia) chain to synthesize carbamoyl phosphate. Tetramer of heterodimers (alpha,beta)4. It depends on Mg(2+) as a cofactor. Mn(2+) is required as a cofactor.

The catalysed reaction is hydrogencarbonate + L-glutamine + 2 ATP + H2O = carbamoyl phosphate + L-glutamate + 2 ADP + phosphate + 2 H(+). It catalyses the reaction hydrogencarbonate + NH4(+) + 2 ATP = carbamoyl phosphate + 2 ADP + phosphate + 2 H(+). The protein operates within amino-acid biosynthesis; L-arginine biosynthesis; carbamoyl phosphate from bicarbonate: step 1/1. It participates in pyrimidine metabolism; UMP biosynthesis via de novo pathway; (S)-dihydroorotate from bicarbonate: step 1/3. Large subunit of the glutamine-dependent carbamoyl phosphate synthetase (CPSase). CPSase catalyzes the formation of carbamoyl phosphate from the ammonia moiety of glutamine, carbonate, and phosphate donated by ATP, constituting the first step of 2 biosynthetic pathways, one leading to arginine and/or urea and the other to pyrimidine nucleotides. The large subunit (synthetase) binds the substrates ammonia (free or transferred from glutamine from the small subunit), hydrogencarbonate and ATP and carries out an ATP-coupled ligase reaction, activating hydrogencarbonate by forming carboxy phosphate which reacts with ammonia to form carbamoyl phosphate. The sequence is that of Carbamoyl phosphate synthase large chain from Corynebacterium glutamicum (strain ATCC 13032 / DSM 20300 / JCM 1318 / BCRC 11384 / CCUG 27702 / LMG 3730 / NBRC 12168 / NCIMB 10025 / NRRL B-2784 / 534).